The sequence spans 144 residues: C-C motif chemokine 25 (144 aa).

The first 23 residues, 1 to 23, serve as a signal peptide directing secretion; the sequence is MKLWLFACLVACFVGAWMPVVHA. 2 disulfides stabilise this stretch: C30–C58 and C31–C73. Residues 98 to 144 are disordered; the sequence is KSASDSQTERKKSNHMKSKVENPNSTSVRSATLGHPRMVMMPRKTNN. The segment covering 118-127 has biased composition (polar residues); sequence ENPNSTSVRS.

This sequence belongs to the intercrine beta (chemokine CC) family. In terms of tissue distribution, specifically expressed by thymic dendritic cells. High levels in thymus and small intestine.

It localises to the secreted. Its function is as follows. Potentially involved in T-cell development. Recombinant protein shows chemotactic activity on thymocytes, macrophages, THP-1 cells, and dendritics cells but is inactive on peripheral blood lymphocytes and neutrophils. Binds to CCR9. Binds to atypical chemokine receptor ACKR4 and mediates the recruitment of beta-arrestin (ARRB1/2) to ACKR4. The sequence is that of C-C motif chemokine 25 (Ccl25) from Mus musculus (Mouse).